The following is an 81-amino-acid chain: Small ribosomal subunit protein bS16 (81 aa).

It belongs to the bacterial ribosomal protein bS16 family.

In Lachnospira eligens (strain ATCC 27750 / DSM 3376 / VPI C15-48 / C15-B4) (Eubacterium eligens), this protein is Small ribosomal subunit protein bS16.